Consider the following 181-residue polypeptide: MAADETNLIWVDLEMTGLEPEVDRIIEIATIVTDKELNILAEGPVIAIHQSEDVLAAMDDWNQKHHGESGLIDRVRASDFSEQDAIEQTIAFLSEHVPAGVSPMCGNSIGQDRRFLNRYMPTLEDYFHYRNIDVSSVKELVRRWRPEVMDGFKKQGTHQALVDIQESIAELRYYREKVFKI.

The 164-residue stretch at 8 to 171 folds into the Exonuclease domain; the sequence is LIWVDLEMTG…VDIQESIAEL (164 aa). Tyr-129 is an active-site residue.

The protein belongs to the oligoribonuclease family.

Its subcellular location is the cytoplasm. Its function is as follows. 3'-to-5' exoribonuclease specific for small oligoribonucleotides. This Shewanella loihica (strain ATCC BAA-1088 / PV-4) protein is Oligoribonuclease.